The chain runs to 499 residues: Pyruvate kinase 1 (499 aa).

Arginine 50 provides a ligand contact to substrate. Residues asparagine 52, serine 54, aspartate 84, and threonine 85 each coordinate K(+). Residue 52-55 coordinates ATP; the sequence is NFSH. Arginine 91 is a binding site for ATP. A Mg(2+)-binding site is contributed by glutamate 241. The substrate site is built by glycine 264, aspartate 265, and threonine 297. Position 265 (aspartate 265) interacts with Mg(2+).

The protein belongs to the pyruvate kinase family. As to quaternary structure, homotetramer. It depends on Mg(2+) as a cofactor. K(+) serves as cofactor.

It carries out the reaction pyruvate + ATP = phosphoenolpyruvate + ADP + H(+). It participates in carbohydrate degradation; glycolysis; pyruvate from D-glyceraldehyde 3-phosphate: step 5/5. Activated by fructose 2,6-bisphosphate, activated by the effector in a cooperative manner. The protein is Pyruvate kinase 1 (PYK1) of Trypanosoma brucei brucei.